Consider the following 329-residue polypeptide: Protein STRICTOSIDINE SYNTHASE-LIKE 11 (329 aa).

The signal sequence occupies residues 1-23 (MMRSFVSLISLLLLLSFSSSVLS). Asparagine 37 and asparagine 79 each carry an N-linked (GlcNAc...) asparagine glycan.

This sequence belongs to the strictosidine synthase family.

The protein localises to the vacuole. It carries out the reaction 3alpha(S)-strictosidine + H2O = secologanin + tryptamine. The protein operates within alkaloid biosynthesis; 3alpha(S)-strictosidine biosynthesis; 3alpha(S)-strictosidine from secologanin and tryptamine: step 1/1. Catalyzes the stereospecific condensation of tryptamine with secologanin to form strictosidine, the key intermediate of indole alkaloid biosynthesis. In Arabidopsis thaliana (Mouse-ear cress), this protein is Protein STRICTOSIDINE SYNTHASE-LIKE 11.